A 620-amino-acid polypeptide reads, in one-letter code: DNA mismatch repair protein MutL (620 aa).

Positions 332-402 (SELGLEAQPE…YRTPLRPATH (71 aa)) are disordered. The segment covering 352–365 (SNSTNSNVSSTSYS) has biased composition (low complexity). The segment covering 378-394 (PLTTTATSYNQGQSSYR) has biased composition (polar residues).

It belongs to the DNA mismatch repair MutL/HexB family.

In terms of biological role, this protein is involved in the repair of mismatches in DNA. It is required for dam-dependent methyl-directed DNA mismatch repair. May act as a 'molecular matchmaker', a protein that promotes the formation of a stable complex between two or more DNA-binding proteins in an ATP-dependent manner without itself being part of a final effector complex. In Shewanella piezotolerans (strain WP3 / JCM 13877), this protein is DNA mismatch repair protein MutL.